Reading from the N-terminus, the 420-residue chain is MVEQDPFEIAVKQLERAAQYMKISEEALEFLKRPQRIVEVTIPVEMDDGTVKVFTGFRVQYNWARGPTKGGIRWHPEETLSTVKALAAWMTWKTAVMDLPYGGGKGGIIVDPKKLSDREKERLARGYIRAIYDVISPYEDIPAPDVYTNPQIMAWMMDEYEAISRRKTPAFGIITGKPLSIGGSLGRNEATARGASYTIREARKVLGWGDLKGKTIAIQGYGNAGYYLAKIMSEDYGMKVVAVSDSKGGIYNPDGLNADEVLKWKQEHGSVKDFPGATNITNEELLELEVDVLAPAAIEEVITKKNADNIKAKIVAEVANGPVTPEADEILFEKGILQIPDFLCNAGGVTVSYFEWVQNITGYYWTLEEVREKLDKKMTKAFYDVYNTAKEKNIHMRDADYVVAVQRVYQAMLDRGWVKH.

Residue K105 is part of the active site. 220–226 provides a ligand contact to NAD(+); sequence GYGNAGY.

The protein belongs to the Glu/Leu/Phe/Val dehydrogenases family. As to quaternary structure, homohexamer.

It is found in the cytoplasm. It carries out the reaction L-glutamate + NAD(+) + H2O = 2-oxoglutarate + NH4(+) + NADH + H(+). The enzyme catalyses L-glutamate + NADP(+) + H2O = 2-oxoglutarate + NH4(+) + NADPH + H(+). The chain is Glutamate dehydrogenase (gdhA) from Pyrococcus endeavori.